The chain runs to 305 residues: Probable lipid kinase YegS-like (305 aa).

One can recognise a DAGKc domain in the interval 1–129 (MTQRRAMLIL…VDLGEVGGKL (129 aa)). ATP-binding positions include Thr39, 65–71 (GDGTLRD), and Thr92. Positions 210, 213, and 215 each coordinate Mg(2+). Catalysis depends on Glu268, which acts as the Proton acceptor.

It belongs to the diacylglycerol/lipid kinase family. YegS lipid kinase subfamily. Mg(2+) serves as cofactor. Requires Ca(2+) as cofactor.

It is found in the cytoplasm. Functionally, probably phosphorylates lipids; the in vivo substrate is unknown. The sequence is that of Probable lipid kinase YegS-like from Pseudomonas savastanoi pv. phaseolicola (strain 1448A / Race 6) (Pseudomonas syringae pv. phaseolicola (strain 1448A / Race 6)).